The primary structure comprises 89 residues: MGLAKEHKTEIITKFGDSATDTGKAEVQVALFSRRIADLTGHLQQHPKDKHSRRGLLMLVGKRKRVLNYLKKVDIERYRKVLADLDLRK.

It belongs to the universal ribosomal protein uS15 family. As to quaternary structure, part of the 30S ribosomal subunit. Forms a bridge to the 50S subunit in the 70S ribosome, contacting the 23S rRNA.

Its function is as follows. One of the primary rRNA binding proteins, it binds directly to 16S rRNA where it helps nucleate assembly of the platform of the 30S subunit by binding and bridging several RNA helices of the 16S rRNA. In terms of biological role, forms an intersubunit bridge (bridge B4) with the 23S rRNA of the 50S subunit in the ribosome. This Chlorobaculum parvum (strain DSM 263 / NCIMB 8327) (Chlorobium vibrioforme subsp. thiosulfatophilum) protein is Small ribosomal subunit protein uS15.